Reading from the N-terminus, the 774-residue chain is Protein translocase subunit SecA (774 aa).

Residues Gln-66, 84–88, and Asp-474 contribute to the ATP site; that span reads GEGKS.

Belongs to the SecA family.

Its subcellular location is the plastid. It is found in the chloroplast stroma. The protein localises to the chloroplast thylakoid membrane. The catalysed reaction is ATP + H2O + cellular proteinSide 1 = ADP + phosphate + cellular proteinSide 2.. Functionally, has a central role in coupling the hydrolysis of ATP to the transfer of proteins across the thylakoid membrane. In Cyanidioschyzon merolae (strain NIES-3377 / 10D) (Unicellular red alga), this protein is Protein translocase subunit SecA.